A 486-amino-acid polypeptide reads, in one-letter code: Cobyric acid synthase (486 aa).

The GATase cobBQ-type domain maps to 248–435; sequence VLNVVVPVLP…LHGLFESPAA (188 aa). Cys329 serves as the catalytic Nucleophile. Residue His427 is part of the active site.

It belongs to the CobB/CobQ family. CobQ subfamily.

It participates in cofactor biosynthesis; adenosylcobalamin biosynthesis. Functionally, catalyzes amidations at positions B, D, E, and G on adenosylcobyrinic A,C-diamide. NH(2) groups are provided by glutamine, and one molecule of ATP is hydrogenolyzed for each amidation. This chain is Cobyric acid synthase, found in Pseudomonas syringae pv. syringae (strain B728a).